Consider the following 391-residue polypeptide: MSKAIKLPQKLMLLGSGELGKEFVIAAQRLGNYVIAVDRYANAPAMQVADFCEVISMLSADDLEAVVTKYQPDFIIPEIEAIRTEKLQEFEDRGITVIPTAAATNYTMNRDRIRELAHEELGIRTAKYGYAITLEELIAVSDEIGFPNVVKPVMSSSGKGQSVVATKEEVEKAWNYAIANSRGDSQKVIVEEFINFEIEITLLTIKQWDSPTIFCSPIGHRQERGDYQESWQPAGISEDKILEAQAIAKKVTDALGGAGIFGVEFFITKDEVIFSELSPRPHDTGMVTLISQNLNEFELHLRAILGLPIPKIEQLGPSASAVILASEKLDAPVFTGIAEALAAPDVDIRLFGKPTAHPYRRMGVALAKAENVQAAREKATDAASKIQISSQ.

N(1)-(5-phospho-beta-D-ribosyl)glycinamide-binding positions include 18–19 (EL) and glutamate 78. ATP contacts are provided by residues arginine 110, lysine 151, 156-161 (SSGKGQ), 191-194 (EEFI), and glutamate 199. Positions 115–305 (ELAHEELGIR…EFELHLRAIL (191 aa)) constitute an ATP-grasp domain. Positions 264 and 276 each coordinate Mg(2+). Residues aspartate 283, lysine 353, and 360–361 (RR) contribute to the N(1)-(5-phospho-beta-D-ribosyl)glycinamide site.

It belongs to the PurK/PurT family. Homodimer.

The catalysed reaction is N(1)-(5-phospho-beta-D-ribosyl)glycinamide + formate + ATP = N(2)-formyl-N(1)-(5-phospho-beta-D-ribosyl)glycinamide + ADP + phosphate + H(+). It functions in the pathway purine metabolism; IMP biosynthesis via de novo pathway; N(2)-formyl-N(1)-(5-phospho-D-ribosyl)glycinamide from N(1)-(5-phospho-D-ribosyl)glycinamide (formate route): step 1/1. Its function is as follows. Involved in the de novo purine biosynthesis. Catalyzes the transfer of formate to 5-phospho-ribosyl-glycinamide (GAR), producing 5-phospho-ribosyl-N-formylglycinamide (FGAR). Formate is provided by PurU via hydrolysis of 10-formyl-tetrahydrofolate. The polypeptide is Formate-dependent phosphoribosylglycinamide formyltransferase (Trichormus variabilis (strain ATCC 29413 / PCC 7937) (Anabaena variabilis)).